The chain runs to 218 residues: Protease PrsW (218 aa).

Residues 1 to 23 (MFAIISAGIAPGIALLSYFYLKD) form a helical membrane-spanning segment. The Cytoplasmic segment spans residues 24–30 (QYDNEPV). A helical transmembrane segment spans residues 31 to 53 (HMVLRSFFLGVVLVFPIMFIQYV). Residues 54 to 98 (LEKENVGGGSFFVSFLSSGFLEESLKWFILMISVYPHAHFDEHYD) are Extracellular-facing. A helical membrane pass occupies residues 99–121 (GIVYGASVSLGFATLENILYLIG). Residues 122–129 (HGVEHAFV) lie on the Cytoplasmic side of the membrane. Residues 130-151 (RALLPVSCHALIGVIMGFYLGK) form a helical membrane-spanning segment. Over 152–180 (ARFSADKARVKWLTLSLVVPSLLHGSYDF) the chain is Extracellular. The chain crosses the membrane as a helical span at residues 181-203 (ILTALSNWIYYMLPFMVFLWWFG). At 204 to 218 (LRKAKKARSVNMMQV) the chain is on the cytoplasmic side.

Belongs to the protease PrsW family.

The protein localises to the cell membrane. In terms of biological role, involved in the degradation of anti-sigma-W factor RsiW. Responsible for Site-1 cleavage of the RsiW anti-sigma factor. This results, after two other proteolytic steps catalyzed by the RasP and ClpXP proteases, in the release of SigW and the transcription activation of the genes under the control of the sigma-W factor. Seems to be responsible for sensing antimicrobial peptides that damage the cell membrane and other agents that cause cell envelope stress. Therefore it is a protease governing regulated intramembrane proteolysis and resistance to antimicrobial peptides in B.subtilis. This Bacillus subtilis (strain 168) protein is Protease PrsW.